The chain runs to 560 residues: DNA ligase B (560 aa).

Lys124 serves as the catalytic N6-AMP-lysine intermediate.

It belongs to the NAD-dependent DNA ligase family. LigB subfamily.

It catalyses the reaction NAD(+) + (deoxyribonucleotide)n-3'-hydroxyl + 5'-phospho-(deoxyribonucleotide)m = (deoxyribonucleotide)n+m + AMP + beta-nicotinamide D-nucleotide.. Its function is as follows. Catalyzes the formation of phosphodiester linkages between 5'-phosphoryl and 3'-hydroxyl groups in double-stranded DNA using NAD as a coenzyme and as the energy source for the reaction. The sequence is that of DNA ligase B from Escherichia coli O6:K15:H31 (strain 536 / UPEC).